We begin with the raw amino-acid sequence, 590 residues long: L-asparaginase (590 aa).

The 352-residue stretch at 6-357 folds into the Asparaginase/glutaminase domain; that stretch reads AHVLVLYTGG…VEKKAMMVKN (352 aa). Thr-16 serves as the catalytic O-isoaspartyl threonine intermediate. An asparaginase region spans residues 44-351; the sequence is NDDDYVSTYY…KDCWELVEKK (308 aa). Residues 85-87 and 117-118 each bind substrate; these read DSS and TD. ANK repeat units follow at residues 398–427, 431–460, 497–526, and 530–559; these read IFPQLLCYAASNGDIEMLKALHENGVDLSV, NGRNALHVAASAGHVGAVKYLLTQGVSFHL, RLGVELCLCASYGDTETLNSWLAAGADINQ, and NGETALHIAVKSRNKQLVHYLLDRDADPYK.

It in the N-terminal section; belongs to the asparaginase 1 family. In terms of tissue distribution, may be present in the larval cuticle.

It carries out the reaction L-asparagine + H2O = L-aspartate + NH4(+). This chain is L-asparaginase, found in Dirofilaria immitis (Canine heartworm).